A 255-amino-acid chain; its full sequence is Pimeloyl-[acyl-carrier protein] methyl ester esterase (255 aa).

Residues 16–241 form the AB hydrolase-1 domain; the sequence is LVLLHGWGLN…AAHAPFISHP (226 aa). Residues W22, 81 to 82, and 142 to 146 contribute to the substrate site; these read SL and FLALQ. S81 functions as the Nucleophile in the catalytic mechanism. Residues D206 and H234 contribute to the active site. Residue H234 participates in substrate binding.

It belongs to the AB hydrolase superfamily. Carboxylesterase BioH family. As to quaternary structure, monomer.

It localises to the cytoplasm. It carries out the reaction 6-carboxyhexanoyl-[ACP] methyl ester + H2O = 6-carboxyhexanoyl-[ACP] + methanol + H(+). Its pathway is cofactor biosynthesis; biotin biosynthesis. Functionally, the physiological role of BioH is to remove the methyl group introduced by BioC when the pimeloyl moiety is complete. It allows to synthesize pimeloyl-ACP via the fatty acid synthetic pathway through the hydrolysis of the ester bonds of pimeloyl-ACP esters. Also displays a weak thioesterase activity. Can form a complex with CoA, and may be involved in the condensation of CoA and pimelic acid into pimeloyl-CoA, a precursor in biotin biosynthesis. The protein is Pimeloyl-[acyl-carrier protein] methyl ester esterase of Serratia marcescens.